The following is a 259-amino-acid chain: 3-deoxy-manno-octulosonate cytidylyltransferase (259 aa).

The protein belongs to the KdsB family.

It is found in the cytoplasm. It carries out the reaction 3-deoxy-alpha-D-manno-oct-2-ulosonate + CTP = CMP-3-deoxy-beta-D-manno-octulosonate + diphosphate. Its pathway is nucleotide-sugar biosynthesis; CMP-3-deoxy-D-manno-octulosonate biosynthesis; CMP-3-deoxy-D-manno-octulosonate from 3-deoxy-D-manno-octulosonate and CTP: step 1/1. It functions in the pathway bacterial outer membrane biogenesis; lipopolysaccharide biosynthesis. In terms of biological role, activates KDO (a required 8-carbon sugar) for incorporation into bacterial lipopolysaccharide in Gram-negative bacteria. This Alkalilimnicola ehrlichii (strain ATCC BAA-1101 / DSM 17681 / MLHE-1) protein is 3-deoxy-manno-octulosonate cytidylyltransferase.